An 89-amino-acid chain; its full sequence is Large ribosomal subunit protein bL27 (89 aa).

Residues 1–20 (MAHKKAGGSSRNGRDSAGRR) are disordered.

Belongs to the bacterial ribosomal protein bL27 family.

This is Large ribosomal subunit protein bL27 from Rhizorhabdus wittichii (strain DSM 6014 / CCUG 31198 / JCM 15750 / NBRC 105917 / EY 4224 / RW1) (Sphingomonas wittichii).